The following is an 85-amino-acid chain: U4-theraphotoxin-Hhn1e (85 aa).

An N-terminal signal peptide occupies residues 1–22 (MKVTLIAILTCAAVLVLHTTAA). Positions 23-48 (EELEAESQLMEVGMPDTELAAVDEER) are excised as a propeptide. Disulfide bonds link Cys52–Cys66, Cys56–Cys77, and Cys71–Cys82.

This sequence belongs to the neurotoxin 12 (Hwtx-2) family. 02 (Hwtx-2) subfamily. Expressed by the venom gland.

It is found in the secreted. Its function is as follows. Postsynaptic neurotoxin. This chain is U4-theraphotoxin-Hhn1e, found in Cyriopagopus hainanus (Chinese bird spider).